The sequence spans 54 residues: Kazal-type inhibitor-like protein (54 aa).

In terms of domain architecture, Kazal-like spans 1-54 (MKVNCKGYPTKFCFGKPLPHCASDGKTYPNRCRFCNAFVKSHGLITLRYYGKCK). 3 disulfides stabilise this stretch: cysteine 5–cysteine 35, cysteine 13–cysteine 32, and cysteine 21–cysteine 53.

In terms of assembly, may form disulfide-linked dimers or trimers (in vitro). In terms of tissue distribution, expressed by the venom gland.

It is found in the secreted. Partially inhibits trypsin in vitro at slightly acidic pH and concentrations in excess of 0.3 mM. Has no protease inhibitory activity at neutral or basic pH. Has no antibacterial activity. Shows no toxicity in vertebrates apart from transient paw edema in mouse. This Bothriechis schlegelii (Eyelash palm pitviper) protein is Kazal-type inhibitor-like protein.